The following is a 145-amino-acid chain: Methyl-coenzyme M reductase I operon protein D (145 aa).

In terms of assembly, MCR is composed of three subunits: alpha, beta, and gamma. The function of proteins C and D is not known.

The protein is Methyl-coenzyme M reductase I operon protein D (mcrD) of Methanothermobacter thermautotrophicus (strain ATCC 29096 / DSM 1053 / JCM 10044 / NBRC 100330 / Delta H) (Methanobacterium thermoautotrophicum).